Here is a 1770-residue protein sequence, read N- to C-terminus: Transposon Ty2-OR1 Gag-Pol polyprotein (1770 aa).

Composition is skewed to polar residues over residues Met1–Asn39 and Lys49–Thr60. Disordered stretches follow at residues Met1–His88 and Gln359–Glu449. The RNA-binding stretch occupies residues Glu295–His397. Low complexity predominate over residues Thr369 to Arg381. Composition is skewed to polar residues over residues Ile399–Val408 and Glu415–Gln435. Asp457 functions as the For protease activity; shared with dimeric partner in the catalytic mechanism. The tract at residues Asn579–Cys636 is integrase-type zinc finger-like. In terms of domain architecture, Integrase catalytic spans Glu656 to Pro831. Asp667 and Asp732 together coordinate Mg(2+). Polar residues-rich tracts occupy residues Phe916–Asn929, Glu1009–Arg1024, and Gln1065–Ser1082. 3 disordered regions span residues Phe916–Asp935, Gly1005–Leu1038, and Gly1057–Glu1205. A Bipartite nuclear localization signal motif is present at residues Lys1193–Arg1227. Residues Asn1353–Gln1491 enclose the Reverse transcriptase Ty1/copia-type domain. Mg(2+) contacts are provided by Asp1361, Asp1442, Asp1443, Asp1625, Glu1667, and Asp1700. An RNase H Ty1/copia-type domain is found at Asp1625–Lys1767.

The capsid protein forms a homotrimer, from which the VLPs are assembled. The protease is a homodimer, whose active site consists of two apposed aspartic acid residues. In terms of processing, initially, virus-like particles (VLPs) are composed of the structural unprocessed proteins Gag and Gag-Pol, and also contain the host initiator methionine tRNA (tRNA(i)-Met) which serves as a primer for minus-strand DNA synthesis, and a dimer of genomic Ty RNA. Processing of the polyproteins occurs within the particle and proceeds by an ordered pathway, called maturation. First, the protease (PR) is released by autocatalytic cleavage of the Gag-Pol polyprotein, and this cleavage is a prerequisite for subsequent processing at the remaining sites to release the mature structural and catalytic proteins. Maturation takes place prior to the RT reaction and is required to produce transposition-competent VLPs.

Its subcellular location is the cytoplasm. It is found in the nucleus. The catalysed reaction is DNA(n) + a 2'-deoxyribonucleoside 5'-triphosphate = DNA(n+1) + diphosphate. It catalyses the reaction Endonucleolytic cleavage to 5'-phosphomonoester.. In terms of biological role, capsid protein (CA) is the structural component of the virus-like particle (VLP), forming the shell that encapsulates the retrotransposons dimeric RNA genome. The particles are assembled from trimer-clustered units and there are holes in the capsid shells that allow for the diffusion of macromolecules. CA also has nucleocapsid-like chaperone activity, promoting primer tRNA(i)-Met annealing to the multipartite primer-binding site (PBS), dimerization of Ty2 RNA and initiation of reverse transcription. The aspartyl protease (PR) mediates the proteolytic cleavages of the Gag and Gag-Pol polyproteins after assembly of the VLP. Functionally, reverse transcriptase/ribonuclease H (RT) is a multifunctional enzyme that catalyzes the conversion of the retro-elements RNA genome into dsDNA within the VLP. The enzyme displays a DNA polymerase activity that can copy either DNA or RNA templates, and a ribonuclease H (RNase H) activity that cleaves the RNA strand of RNA-DNA heteroduplexes during plus-strand synthesis and hydrolyzes RNA primers. The conversion leads to a linear dsDNA copy of the retrotransposon that includes long terminal repeats (LTRs) at both ends. Its function is as follows. Integrase (IN) targets the VLP to the nucleus, where a subparticle preintegration complex (PIC) containing at least integrase and the newly synthesized dsDNA copy of the retrotransposon must transit the nuclear membrane. Once in the nucleus, integrase performs the integration of the dsDNA into the host genome. This chain is Transposon Ty2-OR1 Gag-Pol polyprotein (TY2B-OR1), found in Saccharomyces cerevisiae (strain ATCC 204508 / S288c) (Baker's yeast).